Consider the following 698-residue polypeptide: Elongation factor G (698 aa).

The tr-type G domain maps to 6 to 281; the sequence is ENIRNIGICA…AVVDYLPSPI (276 aa). GTP-binding positions include 15 to 22, 79 to 83, and 133 to 136; these read AHIDAGKT, DTPGH, and NKMD.

It belongs to the TRAFAC class translation factor GTPase superfamily. Classic translation factor GTPase family. EF-G/EF-2 subfamily.

The protein resides in the cytoplasm. Catalyzes the GTP-dependent ribosomal translocation step during translation elongation. During this step, the ribosome changes from the pre-translocational (PRE) to the post-translocational (POST) state as the newly formed A-site-bound peptidyl-tRNA and P-site-bound deacylated tRNA move to the P and E sites, respectively. Catalyzes the coordinated movement of the two tRNA molecules, the mRNA and conformational changes in the ribosome. The sequence is that of Elongation factor G from Rickettsia bellii (strain RML369-C).